Reading from the N-terminus, the 369-residue chain is Probable dual-specificity RNA methyltransferase RlmN (369 aa).

Catalysis depends on glutamate 106, which acts as the Proton acceptor. The region spanning 118–354 is the Radical SAM core domain; sequence EARRLTVCVS…VTVRRSRGQD (237 aa). A disulfide bridge links cysteine 125 with cysteine 359. [4Fe-4S] cluster is bound by residues cysteine 132, cysteine 136, and cysteine 139. S-adenosyl-L-methionine-binding positions include 183 to 184, serine 215, 238 to 240, and asparagine 316; these read GE and SLH. The active-site S-methylcysteine intermediate is the cysteine 359.

Belongs to the radical SAM superfamily. RlmN family. [4Fe-4S] cluster serves as cofactor.

The protein localises to the cytoplasm. It catalyses the reaction adenosine(2503) in 23S rRNA + 2 reduced [2Fe-2S]-[ferredoxin] + 2 S-adenosyl-L-methionine = 2-methyladenosine(2503) in 23S rRNA + 5'-deoxyadenosine + L-methionine + 2 oxidized [2Fe-2S]-[ferredoxin] + S-adenosyl-L-homocysteine. The catalysed reaction is adenosine(37) in tRNA + 2 reduced [2Fe-2S]-[ferredoxin] + 2 S-adenosyl-L-methionine = 2-methyladenosine(37) in tRNA + 5'-deoxyadenosine + L-methionine + 2 oxidized [2Fe-2S]-[ferredoxin] + S-adenosyl-L-homocysteine. Functionally, specifically methylates position 2 of adenine 2503 in 23S rRNA and position 2 of adenine 37 in tRNAs. This chain is Probable dual-specificity RNA methyltransferase RlmN, found in Salinibacter ruber (strain DSM 13855 / M31).